A 222-amino-acid polypeptide reads, in one-letter code: Probable fructose-6-phosphate aldolase (222 aa).

Lys87 acts as the Schiff-base intermediate with substrate in catalysis.

It belongs to the transaldolase family. Type 3A subfamily.

The protein localises to the cytoplasm. It catalyses the reaction beta-D-fructose 6-phosphate = dihydroxyacetone + D-glyceraldehyde 3-phosphate. In terms of biological role, catalyzes the reversible formation of fructose 6-phosphate from dihydroxyacetone and D-glyceraldehyde 3-phosphate via an aldolization reaction. The protein is Probable fructose-6-phosphate aldolase of Streptococcus pneumoniae (strain ATCC 700669 / Spain 23F-1).